The primary structure comprises 141 residues: Flagellar assembly factor FliW (141 aa).

Belongs to the FliW family. Interacts with translational regulator CsrA and flagellin(s).

It localises to the cytoplasm. In terms of biological role, acts as an anti-CsrA protein, binds CsrA and prevents it from repressing translation of its target genes, one of which is flagellin. Binds to flagellin and participates in the assembly of the flagellum. This chain is Flagellar assembly factor FliW, found in Clostridium acetobutylicum (strain ATCC 824 / DSM 792 / JCM 1419 / IAM 19013 / LMG 5710 / NBRC 13948 / NRRL B-527 / VKM B-1787 / 2291 / W).